Here is a 331-residue protein sequence, read N- to C-terminus: Outer membrane lipoprotein PM1514 (331 aa).

Positions 1-20 (MQYFDIKKSLPVFCSLLITA) are cleaved as a signal peptide. The N-palmitoyl cysteine moiety is linked to residue Cys21. Cys21 is lipidated: S-diacylglycerol cysteine.

It localises to the cell outer membrane. Its subcellular location is the cell surface. The chain is Outer membrane lipoprotein PM1514 from Pasteurella multocida (strain Pm70).